The sequence spans 319 residues: Taste receptor type 2 member 30 (319 aa).

M1 is a topological domain (extracellular). The helical transmembrane segment at 2–22 threads the bilayer; it reads ITFLPIIFSILIVVIFVIGNF. The Cytoplasmic portion of the chain corresponds to 23–46; it reads ANGFIALVNSIEWVKRQKISFVDQ. The chain crosses the membrane as a helical span at residues 47–67; it reads ILTALAVSRVGLLWVLLLHWY. Topologically, residues 68 to 86 are extracellular; sequence ATQLNPAFYSVEVRITVYN. Residues 87–107 form a helical membrane-spanning segment; it reads VWAVTNHFSSWLATSLSMFYL. At 108 to 126 the chain is on the cytoplasmic side; it reads LKIANFSNLIFLRIKRRVK. Residues 127 to 147 traverse the membrane as a helical segment; that stretch reads SVVLVILLGPLLFLVCHLFVI. The Extracellular portion of the chain corresponds to 148–178; sequence NMDETIWTKEYEGNMTWKIKLRSAMYHSNMT. N161 and N176 each carry an N-linked (GlcNAc...) asparagine glycan. The chain crosses the membrane as a helical span at residues 179–199; the sequence is LTMLANFVPLTLTLISFLLLI. The Cytoplasmic segment spans residues 200–229; that stretch reads CSLCKHLKKMQLHGKGSQDPSTKVHIKALQ. The chain crosses the membrane as a helical span at residues 230–250; that stretch reads TVTSFLLLCAIYFLSMIISVC. Over 251 to 259 the chain is Extracellular; the sequence is NLGRLEKQP. A helical transmembrane segment spans residues 260–280; that stretch reads VFMFCQAIIFSYPSTHPFILI. Residues 281 to 319 are Cytoplasmic-facing; sequence LGNKKLKQIFLSVLWHVRYWVKDRSLRLHRFTRAALCKG.

This sequence belongs to the G-protein coupled receptor T2R family.

It localises to the membrane. In terms of biological role, receptor that may play a role in the perception of bitterness and is gustducin-linked. May play a role in sensing the chemical composition of the gastrointestinal content. The activity of this receptor may stimulate alpha gustducin, mediate PLC-beta-2 activation and lead to the gating of TRPM5. The protein is Taste receptor type 2 member 30 (TAS2R30) of Pan troglodytes (Chimpanzee).